We begin with the raw amino-acid sequence, 81 residues long: MKVFFILIIFSFTLATCQGHCIGSIPLPEMEDGEDVPLRTCVDTHDEKKHLIVSTWKTANSFSCECRQDGMWCCKEYVAVA.

The first 19 residues, 1–19, serve as a signal peptide directing secretion; the sequence is MKVFFILIIFSFTLATCQG. Intrachain disulfides connect cysteine 21–cysteine 74, cysteine 41–cysteine 66, and cysteine 64–cysteine 73.

The protein belongs to the beta-microseminoprotein family.

It is found in the secreted. Shows an slight inhibitory effect toward the metalloproteinase brevilysin H6, but does not inhibit the metalloproteinases thermolysin, HR1A and HR1B. The protein is Small serum protein 4 of Protobothrops flavoviridis (Habu).